A 171-amino-acid chain; its full sequence is Co-chaperone protein HscB homolog (171 aa).

The J domain maps to 3-75 (SHFALFDLEP…SQRARYLLSL (73 aa)).

This sequence belongs to the HscB family. In terms of assembly, interacts with HscA and stimulates its ATPase activity.

In terms of biological role, co-chaperone involved in the maturation of iron-sulfur cluster-containing proteins. Seems to help targeting proteins to be folded toward HscA. This is Co-chaperone protein HscB homolog from Azotobacter vinelandii.